The following is a 174-amino-acid chain: Flavodoxin (174 aa).

The Flavodoxin-like domain maps to 4-166; sequence IGIFFGSDTG…RIIQWTKKIK (163 aa).

Belongs to the flavodoxin family. It depends on FMN as a cofactor.

Functionally, low-potential electron donor to a number of redox enzymes. This Buchnera aphidicola subsp. Baizongia pistaciae (strain Bp) protein is Flavodoxin (fldA).